A 330-amino-acid chain; its full sequence is UPF0324 membrane protein BT_4609 (330 aa).

Transmembrane regions (helical) follow at residues 16–33 (IYVA…LDYI), 38–60 (AWSA…LTCG), 73–95 (YLLQ…LASG), 99–116 (MEFT…GWFI), 128–150 (SYLI…GPVL), 160–182 (ALGT…GHAL), 189–211 (FGTW…AAYG), 221–240 (IKLT…SFIF), 247–269 (ISIP…LLNG), and 284–306 (TLTI…SVGV).

It belongs to the UPF0324 family.

The protein localises to the cell membrane. The sequence is that of UPF0324 membrane protein BT_4609 from Bacteroides thetaiotaomicron (strain ATCC 29148 / DSM 2079 / JCM 5827 / CCUG 10774 / NCTC 10582 / VPI-5482 / E50).